Consider the following 425-residue polypeptide: Serine--tRNA ligase (425 aa).

233–235 (TAE) contributes to the L-serine binding site. 264 to 266 (RAE) provides a ligand contact to ATP. Residue Glu-287 participates in L-serine binding. An ATP-binding site is contributed by 351–354 (EISS). Ser-387 provides a ligand contact to L-serine.

This sequence belongs to the class-II aminoacyl-tRNA synthetase family. Type-1 seryl-tRNA synthetase subfamily. As to quaternary structure, homodimer. The tRNA molecule binds across the dimer.

It is found in the cytoplasm. It catalyses the reaction tRNA(Ser) + L-serine + ATP = L-seryl-tRNA(Ser) + AMP + diphosphate + H(+). It carries out the reaction tRNA(Sec) + L-serine + ATP = L-seryl-tRNA(Sec) + AMP + diphosphate + H(+). The protein operates within aminoacyl-tRNA biosynthesis; selenocysteinyl-tRNA(Sec) biosynthesis; L-seryl-tRNA(Sec) from L-serine and tRNA(Sec): step 1/1. In terms of biological role, catalyzes the attachment of serine to tRNA(Ser). Is also able to aminoacylate tRNA(Sec) with serine, to form the misacylated tRNA L-seryl-tRNA(Sec), which will be further converted into selenocysteinyl-tRNA(Sec). The polypeptide is Serine--tRNA ligase (Clostridium perfringens (strain SM101 / Type A)).